The sequence spans 163 residues: Type-2 ice-structuring protein (163 aa).

The N-terminal stretch at 1 to 17 (MLTVSLLVCAMMALTQA) is a signal peptide. A propeptide spanning residues 18-34 (NDDKILKGTATEAGPVS) is cleaved from the precursor. In terms of domain architecture, C-type lectin spans 39–163 (PNCPAGWQPL…SHKSVCAMTF (125 aa)). 5 disulfides stabilise this stretch: C41/C52, C69/C159, C103/C134, C123/C145, and C135/C151.

The N-terminus is blocked.

Its subcellular location is the secreted. Functionally, antifreeze proteins lower the blood freezing point. This is Type-2 ice-structuring protein from Hemitripterus americanus (Sea raven).